Here is a 699-residue protein sequence, read N- to C-terminus: Integrator complex subunit 10 (699 aa).

Serine 220 and serine 370 each carry phosphoserine. A Glycyl lysine isopeptide (Lys-Gly) (interchain with G-Cter in SUMO2) cross-link involves residue lysine 453.

This sequence belongs to the Integrator subunit 10 family. Component of the Integrator complex, composed of core subunits INTS1, INTS2, INTS3, INTS4, INTS5, INTS6, INTS7, INTS8, INTS9/RC74, INTS10, INTS11/CPSF3L, INTS12, INTS13, INTS14 and INTS15. The core complex associates with protein phosphatase 2A subunits PPP2CA and PPP2R1A, to form the Integrator-PP2A (INTAC) complex. INTS10 is part of the tail subcomplex, composed of INTS10, INTS13, INTS14 and INTS15.

Its subcellular location is the nucleus. Functionally, component of the integrator complex, a multiprotein complex that terminates RNA polymerase II (Pol II) transcription in the promoter-proximal region of genes. The integrator complex provides a quality checkpoint during transcription elongation by driving premature transcription termination of transcripts that are unfavorably configured for transcriptional elongation: the complex terminates transcription by (1) catalyzing dephosphorylation of the C-terminal domain (CTD) of Pol II subunit POLR2A/RPB1 and SUPT5H/SPT5, (2) degrading the exiting nascent RNA transcript via endonuclease activity and (3) promoting the release of Pol II from bound DNA. The integrator complex is also involved in terminating the synthesis of non-coding Pol II transcripts, such as enhancer RNAs (eRNAs), small nuclear RNAs (snRNAs), telomerase RNAs and long non-coding RNAs (lncRNAs). Within the integrator complex, INTS10 is part of the integrator tail module that acts as a platform for the recruitment of transcription factors at promoters. May be not involved in the recruitment of cytoplasmic dynein to the nuclear envelope, probably as component of the integrator complex. The polypeptide is Integrator complex subunit 10 (INTS10) (Macaca fascicularis (Crab-eating macaque)).